Consider the following 905-residue polypeptide: Probable coatomer subunit gamma (905 aa).

HEAT repeat units follow at residues 265-302, 303-340, 374-412, 414-450, and 525-563; these read TQFRDQMVPFLHGWLKSKGDMVNLEVARNMVRLKNISD, DDLQPVVSVLKIFLSSHRSATRFSAIRTLNELAMTRPH, DESVDRLMKQIVTFMSDISDNFKIIVVDAIRSLCLKFPR, QDSMLTFLSNILCDEGGYEFKRAAVDAISDMIKYIPE, and KFVQRSVKVILTRCLEDADDEVRDRAAFSVKALEDRDAF. The residue at position 604 (Ser604) is a Phosphoserine.

It belongs to the COPG family. In terms of assembly, oligomeric complex that consists of at least the alpha, beta, beta', gamma, delta, epsilon and zeta subunits.

Its subcellular location is the cytoplasm. The protein localises to the golgi apparatus membrane. It is found in the cytoplasmic vesicle. It localises to the COPI-coated vesicle membrane. Its function is as follows. The coatomer is a cytosolic protein complex that binds to dilysine motifs and reversibly associates with Golgi non-clathrin-coated vesicles, which further mediate biosynthetic protein transport from the ER, via the Golgi up to the trans Golgi network. Coatomer complex is required for budding from Golgi membranes, and is essential for the retrograde Golgi-to-ER transport of dilysine-tagged proteins. The sequence is that of Probable coatomer subunit gamma (sec21) from Schizosaccharomyces pombe (strain 972 / ATCC 24843) (Fission yeast).